Reading from the N-terminus, the 345-residue chain is Selenide, water dikinase (345 aa).

Cys16 is a catalytic residue. ATP-binding positions include Lys19 and 46 to 48 (TSD). Asp49 contributes to the Mg(2+) binding site. ATP is bound by residues Asp66, Asp89, and 136-138 (GHT). Asp89 serves as a coordination point for Mg(2+). Asp224 is a Mg(2+) binding site.

The protein belongs to the selenophosphate synthase 1 family. Class I subfamily. As to quaternary structure, homodimer. Requires Mg(2+) as cofactor.

The enzyme catalyses hydrogenselenide + ATP + H2O = selenophosphate + AMP + phosphate + 2 H(+). Its function is as follows. Synthesizes selenophosphate from selenide and ATP. This chain is Selenide, water dikinase, found in Clostridium botulinum (strain Eklund 17B / Type B).